The primary structure comprises 922 residues: GPI inositol-deacylase (922 aa).

Topologically, residues 1–11 are cytoplasmic; that stretch reads MFLHSVNLWNL. A helical membrane pass occupies residues 12-32; the sequence is AFYVFMVFLATLGLWDVFFGF. Residues 33–597 lie on the Lumenal side of the membrane; sequence EENKCSMSYM…GQVVRFHGGA (565 aa). Ser174 is an active-site residue. Asn363, Asn402, and Asn558 each carry an N-linked (GlcNAc...) asparagine glycan. A helical membrane pass occupies residues 598–618; the sequence is LPAYVVSSILLAYGGQLYSLL. The Cytoplasmic portion of the chain corresponds to 619–641; sequence STGFCLEYGTMLDKEAKPYKVDP. Residues 642–662 form a helical membrane-spanning segment; that stretch reads FVIMIKFLLGYKWFKELWDAV. The Lumenal segment spans residues 663 to 668; that stretch reads LLPELD. The helical transmembrane segment at 669 to 689 threads the bilayer; the sequence is AIVLTSQSMCFPLVSLILFLF. The Cytoplasmic segment spans residues 690–694; the sequence is GTCTA. The chain crosses the membrane as a helical span at residues 695–715; sequence YWSGLLSSASVQLLSSLWLAL. Residues 716–733 lie on the Lumenal side of the membrane; sequence KRPAELPKDVKVMSPDLP. The chain crosses the membrane as a helical span at residues 734–754; the sequence is VLTVVFLIISWTTCGALAILL. Residues 755–816 lie on the Cytoplasmic side of the membrane; sequence SYLYYVFKVV…NDAEDSLRMH (62 aa). A disordered region spans residues 776-801; sequence NQPVNPKHSRRSEKKSNHHKDSAIQN. Residues 782–793 are compositionally biased toward basic residues; it reads KHSRRSEKKSNH. A helical transmembrane segment spans residues 817–837; it reads STVINLLTWVVLLSMPSLIYW. Topologically, residues 838–853 are lumenal; that stretch reads SKNLRYYFKLNPDPCK. Residues 854 to 874 traverse the membrane as a helical segment; that stretch reads PLAFLLIPAIAVLGNTHTVSI. Topologically, residues 875–894 are cytoplasmic; sequence KSSKLLKTASQFPLPLAVGV. Residues 895–915 traverse the membrane as a helical segment; the sequence is IAFGSSHLYRVPCFVIIPLVF. Topologically, residues 916–922 are lumenal; it reads HSLCNFM.

Belongs to the GPI inositol-deacylase family.

Its subcellular location is the endoplasmic reticulum membrane. Functionally, GPI inositol-deacylase that catalyzes the remove of the acyl chain linked to the 2-OH position of inositol ring from the GPI-anchored protein (GPI-AP) in the endoplasmic reticulum. Initiates the post-attachment remodeling phase of GPI-AP biogenesis and participates in endoplasmic reticulum (ER)-to-Golgi transport of GPI-anchored protein. The polypeptide is GPI inositol-deacylase (Rattus norvegicus (Rat)).